The following is a 195-amino-acid chain: Phosphoheptose isomerase (195 aa).

Residues 36–195 (VSKVLQSGNT…IVEYNLFKME (160 aa)) form the SIS domain. 51-53 (NGG) is a substrate binding site. Zn(2+) is bound by residues His60 and Glu64. Substrate-binding positions include Glu64, 95-96 (ND), 121-123 (STS), Ser126, and Gln173. Zn(2+) is bound by residues Gln173 and His181.

Belongs to the SIS family. GmhA subfamily. Zn(2+) serves as cofactor.

It localises to the cytoplasm. The enzyme catalyses 2 D-sedoheptulose 7-phosphate = D-glycero-alpha-D-manno-heptose 7-phosphate + D-glycero-beta-D-manno-heptose 7-phosphate. It functions in the pathway carbohydrate biosynthesis; D-glycero-D-manno-heptose 7-phosphate biosynthesis; D-glycero-alpha-D-manno-heptose 7-phosphate and D-glycero-beta-D-manno-heptose 7-phosphate from sedoheptulose 7-phosphate: step 1/1. Its function is as follows. Catalyzes the isomerization of sedoheptulose 7-phosphate in D-glycero-D-manno-heptose 7-phosphate. The protein is Phosphoheptose isomerase of Leptospira borgpetersenii serovar Hardjo-bovis (strain JB197).